Reading from the N-terminus, the 766-residue chain is FYVE, RhoGEF and PH domain-containing protein 4 (766 aa).

Disordered stretches follow at residues 1 to 20 (MEEI…PSKV), 46 to 83 (NLNA…DKTQ), and 134 to 188 (ETAT…ESPL). The segment at 1–150 (MEEIKPASAS…SPTTDSCDGN (150 aa)) is actin filament-binding. 2 stretches are compositionally biased toward polar residues: residues 58 to 83 (LTTT…DKTQ) and 145 to 157 (DSCD…SSYR). The span at 167 to 184 (LEERGAETETKVQERENG) shows a compositional bias: basic and acidic residues. Residues 206 to 393 (KLHKIANELL…STAASHSNSA (188 aa)) form the DH domain. A PH 1 domain is found at 422–521 (ELIKEGQILK…WIKALQETID (100 aa)). Residues 559-619 (DNEVTMCMKC…VCKDCYQIIS (61 aa)) form an FYVE-type zinc finger. Cys565, Cys568, Cys582, Cys585, Cys590, Cys593, Cys611, and Cys614 together coordinate Zn(2+). In terms of domain architecture, PH 2 spans 643–740 (NSVVCSFLQY…WLKVILLAVT (98 aa)). Ser702 and Ser716 each carry phosphoserine. The disordered stretch occupies residues 742–766 (ETPGGPNEHPATLDDHPEPKKKSEC). Positions 752 to 766 (ATLDDHPEPKKKSEC) are enriched in basic and acidic residues.

Homooligomer. Expressed in different tissues, including brain, cerebellum, peripheral nerve, skeletal muscle, heart, uterus, placenta and testis.

Its subcellular location is the cytoplasm. It is found in the cytoskeleton. It localises to the cell projection. The protein localises to the filopodium. Activates CDC42, a member of the Ras-like family of Rho- and Rac proteins, by exchanging bound GDP for free GTP. Plays a role in regulating the actin cytoskeleton and cell shape. Activates MAPK8. The protein is FYVE, RhoGEF and PH domain-containing protein 4 (FGD4) of Homo sapiens (Human).